A 122-amino-acid chain; its full sequence is Small ribosomal subunit protein uS13 (122 aa).

Residues 95–122 (GLPVRGQRTKTNARTRKGPKKTIAGKKK) form a disordered region.

The protein belongs to the universal ribosomal protein uS13 family. Part of the 30S ribosomal subunit. Forms a loose heterodimer with protein S19. Forms two bridges to the 50S subunit in the 70S ribosome.

Functionally, located at the top of the head of the 30S subunit, it contacts several helices of the 16S rRNA. In the 70S ribosome it contacts the 23S rRNA (bridge B1a) and protein L5 of the 50S subunit (bridge B1b), connecting the 2 subunits; these bridges are implicated in subunit movement. Contacts the tRNAs in the A and P-sites. The polypeptide is Small ribosomal subunit protein uS13 (Corynebacterium diphtheriae (strain ATCC 700971 / NCTC 13129 / Biotype gravis)).